The sequence spans 43 residues: Protein PsbN (43 aa).

Residues 5–27 form a helical membrane-spanning segment; sequence TLFAISISCLLVSFTGYALYTAF.

It belongs to the PsbN family.

The protein resides in the plastid. It localises to the chloroplast thylakoid membrane. In terms of biological role, may play a role in photosystem I and II biogenesis. The sequence is that of Protein PsbN from Thuja plicata (Western red-cedar).